Here is a 457-residue protein sequence, read N- to C-terminus: UPF0210 protein Sfum_2948 (457 aa).

Belongs to the UPF0210 family. Homodimer.

This chain is UPF0210 protein Sfum_2948, found in Syntrophobacter fumaroxidans (strain DSM 10017 / MPOB).